Consider the following 177-residue polypeptide: Nucleoside triphosphate/diphosphate phosphatase (177 aa).

R23 serves as the catalytic Proton donor. Residues N87, D103, D105, D107, D120, and E123 each contribute to the Mg(2+) site.

Belongs to the Ntdp family. Mg(2+) is required as a cofactor.

The enzyme catalyses a ribonucleoside 5'-triphosphate + H2O = a ribonucleoside 5'-diphosphate + phosphate + H(+). It catalyses the reaction a ribonucleoside 5'-diphosphate + H2O = a ribonucleoside 5'-phosphate + phosphate + H(+). Functionally, has nucleoside phosphatase activity towards nucleoside triphosphates and nucleoside diphosphates. This Streptococcus suis (strain 98HAH33) protein is Nucleoside triphosphate/diphosphate phosphatase.